A 507-amino-acid polypeptide reads, in one-letter code: Tyrosine protein-kinase src-2 (507 aa).

Residues 1–10 (MGSCIGKEDP) show a composition bias toward basic and acidic residues. Positions 1–52 (MGSCIGKEDPPPGATSPVHTSSTLGRESLPSHPRIPSIGPIAASSSGNTIDK) are disordered. A lipid anchor (N-myristoyl glycine) is attached at Gly-2. Over residues 35–47 (IPSIGPIAASSSG) the composition is skewed to low complexity. In terms of domain architecture, SH3 spans 57–118 (SQSANFVALF…PSNYVAREKS (62 aa)). Residues 124–216 (WYFGKMRRID…GLCVNLGAPC (93 aa)) enclose the SH2 domain. One can recognise a Protein kinase domain in the interval 240–494 (VRLIRQIGAG…LQWKLEDLFN (255 aa)). ATP is bound by residues 246–254 (IGAGQFGEV) and Lys-268. Asp-358 (proton acceptor) is an active-site residue. The residue at position 500 (Tyr-500) is a Phosphotyrosine.

It belongs to the protein kinase superfamily. Tyr protein kinase family. SRC subfamily. Requires Mg(2+) as cofactor. The cofactor is Mn(2+). Post-translationally, may be phosphorylated on Tyr-500 by csk-1. Expressed in vulva, cells around anus and pharyngeal muscles.

It catalyses the reaction L-tyrosyl-[protein] + ATP = O-phospho-L-tyrosyl-[protein] + ADP + H(+). With respect to regulation, may be inhibited by csk-1-mediated phosphorylation at Tyr-500. In terms of biological role, non-receptor tyrosine-protein kinase which may play a role in larval and pharynx development. Unlike src-1, does not play a role in embryonic development. This is Tyrosine protein-kinase src-2 from Caenorhabditis elegans.